The sequence spans 274 residues: 2,3,4,5-tetrahydropyridine-2,6-dicarboxylate N-succinyltransferase (274 aa).

Residues R104 and D141 each coordinate substrate.

It belongs to the transferase hexapeptide repeat family. In terms of assembly, homotrimer.

The protein localises to the cytoplasm. It carries out the reaction (S)-2,3,4,5-tetrahydrodipicolinate + succinyl-CoA + H2O = (S)-2-succinylamino-6-oxoheptanedioate + CoA. It participates in amino-acid biosynthesis; L-lysine biosynthesis via DAP pathway; LL-2,6-diaminopimelate from (S)-tetrahydrodipicolinate (succinylase route): step 1/3. The chain is 2,3,4,5-tetrahydropyridine-2,6-dicarboxylate N-succinyltransferase from Shigella boydii serotype 4 (strain Sb227).